The chain runs to 463 residues: Cysteine--tRNA ligase (463 aa).

A Zn(2+)-binding site is contributed by Cys27. The 'HIGH' region signature appears at 29-39 (PTVYGLIHIGN). Zn(2+) contacts are provided by Cys207, His232, and Glu236. The 'KMSKS' region motif lies at 264–268 (KMSKS). Lys267 provides a ligand contact to ATP.

It belongs to the class-I aminoacyl-tRNA synthetase family. In terms of assembly, monomer. Zn(2+) serves as cofactor.

It is found in the cytoplasm. It catalyses the reaction tRNA(Cys) + L-cysteine + ATP = L-cysteinyl-tRNA(Cys) + AMP + diphosphate. The protein is Cysteine--tRNA ligase of Pseudothermotoga lettingae (strain ATCC BAA-301 / DSM 14385 / NBRC 107922 / TMO) (Thermotoga lettingae).